The sequence spans 98 residues: Large ribosomal subunit protein uL23 (98 aa).

Belongs to the universal ribosomal protein uL23 family. As to quaternary structure, part of the 50S ribosomal subunit. Contacts protein L29, and trigger factor when it is bound to the ribosome.

Its function is as follows. One of the early assembly proteins it binds 23S rRNA. One of the proteins that surrounds the polypeptide exit tunnel on the outside of the ribosome. Forms the main docking site for trigger factor binding to the ribosome. In Methylobacterium nodulans (strain LMG 21967 / CNCM I-2342 / ORS 2060), this protein is Large ribosomal subunit protein uL23.